Consider the following 1466-residue polypeptide: Collagen alpha-1(III) chain (1466 aa).

The N-terminal stretch at 1-23 (MMSFVQKGSWLLLALLHPTIILA) is a signal peptide. A propeptide spans 24–153 (QQEAVEGGCS…CPTGPQNYSP (130 aa)) (N-terminal propeptide). The VWFC domain maps to 30-89 (GGCSHLGQSYADRDVWKPEPCQICVCDSGSVLCDDIICDDQELDCPNPEIPFGECCAVCP). Residues 95–1194 (PTRPPNGQGP…GPPGPPGAPG (1100 aa)) are disordered. The span at 99–108 (PNGQGPQGPK) shows a compositional bias: low complexity. The span at 146 to 155 (TGPQNYSPQY) shows a compositional bias: polar residues. The nonhelical region (N-terminal) stretch occupies residues 149–167 (QNYSPQYDSYDVKSGVAVG). Residues 168–1196 (GLAGYPGPAG…PGPPGAPGPC (1029 aa)) form a triple-helical region region. 17 positions are modified to 4-hydroxyproline: proline 173, proline 179, proline 182, proline 185, proline 191, proline 194, proline 197, proline 203, proline 206, proline 215, proline 218, proline 236, proline 239, proline 245, proline 248, proline 257, and proline 260. Positions 175-185 (PAGPPGPPGPP) are enriched in pro residues. Over residues 187-199 (TSGHPGSPGSPGY) the composition is skewed to low complexity. A compositionally biased stretch (basic and acidic residues) spans 229–241 (KDGESGRPGRPGE). Low complexity predominate over residues 251 to 260 (KGPAGIPGFP). A 5-hydroxylysine; alternate modification is found at lysine 263. Lysine 263 is a glycosylation site (O-linked (Gal...) hydroxylysine; alternate). Residues 266-277 (RGFDGRNGEKGE) are compositionally biased toward basic and acidic residues. 4-hydroxyproline is present on proline 281. Residue lysine 284 is modified to 5-hydroxylysine. 4-hydroxyproline occurs at positions 290, 296, 305, 311, 314, 332, 335, 338, 344, 347, 359, 365, 371, 383, 386, 392, 404, 407, 416, 425, 434, 443, 455, 458, 470, 473, 479, 488, 500, 512, 524, 530, 533, 539, 542, 545, 551, 554, 563, 566, 575, 581, 590, 599, 602, 608, 620, 635, 644, 650, 656, 659, 661, 668, 671, 680, 686, 692, 701, 703, 713, 716, 722, 728, 737, 746, 749, 755, 770, 776, 785, 788, 797, 806, 812, 815, 821, 830, 839, 845, and 854. Over residues 311 to 322 (PGLPGAAGARGN) the composition is skewed to low complexity. Residues 355–380 (PAGSPGSNGAPGQRGEPGPQGHAGAQ) are compositionally biased toward low complexity. Residues 390 to 399 (GSPGGKGEMG) show a composition bias toward gly residues. Low complexity predominate over residues 404-425 (PGAPGLMGARGPPGPAGANGAP). Residues 426-435 (GLRGGAGEPG) are compositionally biased toward gly residues. Residues 478–523 (LPGAAGERGAPGFRGPAGPNGIPGEKGPAGERGAPGPAGPRGAAGE) show a composition bias toward low complexity. Gly residues predominate over residues 528 to 549 (GVPGGPGMRGMPGSPGGPGSDG). Gly residues predominate over residues 642 to 651 (GLPGTGGPPG). Residues 669 to 678 (GAPGGKGDAG) show a composition bias toward gly residues. Low complexity predominate over residues 679-692 (APGERGPPGLAGAP). Over residues 693-711 (GLRGGAGPPGPEGGKGAAG) the composition is skewed to gly residues. Over residues 729–738 (GERGGLGSPG) the composition is skewed to gly residues. Low complexity predominate over residues 787–796 (LPGIAGPRGS). Positions 823 to 835 (GKGERGAPGEKGE) are enriched in basic and acidic residues. Gly residues predominate over residues 836 to 850 (GGPPGVAGPPGGSGP). A 5-hydroxylysine modification is found at lysine 860. Residues 864–873 (GSPGGPGAAG) show a composition bias toward gly residues. 4-hydroxyproline occurs at positions 866, 869, 875, 881, 884, 890, 892, 899, 905, 914, 917, 929, 935, 941, and 944. Positions 890–907 (PGPPGPSGSPGKDGPPGP) are enriched in pro residues. Over residues 908-917 (AGNTGAPGSP) the composition is skewed to low complexity. Over residues 946 to 961 (PLGIAGITGARGLAGP) the composition is skewed to low complexity. 3 positions are modified to 4-hydroxyproline: proline 962, proline 965, and proline 971. Lysine 977 is modified (5-hydroxylysine). A 4-hydroxyproline mark is found at proline 983, proline 995, proline 1001, proline 1010, proline 1016, proline 1022, proline 1028, proline 1040, proline 1043, proline 1046, proline 1049, proline 1052, proline 1076, and proline 1085. Residues 1046 to 1055 (PGHPGPPGPV) show a composition bias toward pro residues. Low complexity predominate over residues 1067–1085 (SGPAGPAGAPGPAGSRGAP). Lysine 1106 carries the 5-hydroxylysine modification. A 4-hydroxyproline mark is found at proline 1112, proline 1115, proline 1118, proline 1121, proline 1133, proline 1148, proline 1157, proline 1163, proline 1178, proline 1181, proline 1184, proline 1187, proline 1190, and proline 1193. The segment covering 1123–1133 (PAGQQGAIGSP) has biased composition (low complexity). Positions 1181–1193 (PGQPGPPGPPGAP) are enriched in pro residues. The interval 1197–1205 (CGGVGAAAI) is nonhelical region (C-terminal). The propeptide at 1222-1466 (DEPMDFKINT…GVDVGPVCFL (245 aa)) is C-terminal propeptide. In terms of domain architecture, Fibrillar collagen NC1 spans 1232 to 1466 (DEIMTSLKSV…GVDVGPVCFL (235 aa)). Intrachain disulfides connect cysteine 1262/cysteine 1294, cysteine 1302/cysteine 1464, and cysteine 1372/cysteine 1417. 5 residues coordinate Ca(2+): aspartate 1280, asparagine 1282, glutamine 1283, cysteine 1285, and aspartate 1288.

The protein belongs to the fibrillar collagen family. In terms of assembly, trimers of identical alpha 1(III) chains. The chains are linked to each other by interchain disulfide bonds. Trimers are also cross-linked via hydroxylysines. Interacts with ADGRG1. Proline residues at the third position of the tripeptide repeating unit (G-X-Y) are hydroxylated in some or all of the chains. In terms of processing, O-linked glycan consists of a Glc-Gal disaccharide bound to the oxygen atom of a post-translationally added hydroxyl group.

It localises to the secreted. It is found in the extracellular space. Its subcellular location is the extracellular matrix. Its function is as follows. Collagen type III occurs in most soft connective tissues along with type I collagen. Involved in regulation of cortical development. Is the major ligand of ADGRG1 in the developing brain and binding to ADGRG1 inhibits neuronal migration and activates the RhoA pathway by coupling ADGRG1 to GNA13 and possibly GNA12. In Homo sapiens (Human), this protein is Collagen alpha-1(III) chain (COL3A1).